Consider the following 221-residue polypeptide: Endo-1,4-beta-xylanase 2 (221 aa).

The first 19 residues, 1-19, serve as a signal peptide directing secretion; it reads MVAFTSLLAGFAAIAGVLS. Positions 32-221 constitute a GH11 domain; it reads QTIGPGTGYS…SSGSASITVS (190 aa). Asn-69 and Asn-92 each carry an N-linked (GlcNAc...) asparagine glycan. Glu-117 acts as the Nucleophile in catalysis. Catalysis depends on Glu-208, which acts as the Proton donor.

Belongs to the glycosyl hydrolase 11 (cellulase G) family.

The protein resides in the secreted. The catalysed reaction is Endohydrolysis of (1-&gt;4)-beta-D-xylosidic linkages in xylans.. It functions in the pathway glycan degradation; xylan degradation. Endo-1,4-beta-xylanase involved in the hydrolysis of xylan, a major structural heterogeneous polysaccharide found in plant biomass representing the second most abundant polysaccharide in the biosphere, after cellulose. This is Endo-1,4-beta-xylanase 2 (Xyn2) from Trichoderma harzianum (Hypocrea lixii).